The sequence spans 472 residues: Inhibitor of Apoptosis OPG037 (472 aa).

6 ANK repeats span residues 97 to 126 (DGNY…DPNA), 130 to 161 (HNKT…KINN), 233 to 263 (DGNT…DVNK), 267 to 297 (FGDS…VITD), 322 to 351 (YDST…ICED), and 353 to 377 (MYYA…SVDF).

It belongs to the orthopoxvirus OPG037 protein family. In terms of assembly, may interact with host caspase-9-Apaf-1 complex.

It localises to the host cytoplasm. Functionally, inhibits host apoptosis. Acts by associating with host apoptosome. The protein is Inhibitor of Apoptosis OPG037 (OPG037) of Vaccinia virus (strain Western Reserve) (VACV).